The primary structure comprises 421 residues: MEEDERGKLFVGGLSWETTQENLSRYFCRFGDIIDCVVMKNNESGRSRGFGFVTFADPTNVNHVLQNGPHTLDGRTIDPKPCNPRTLQKPKKGGGYKVFLGGLPSNVTETDLRTFFNRYGKVTEVVIMYDQEKKKSRGFGFLSFEEESSVEHVTNERYINLNGKQVEIKKAEPRDGSGGQNSNNSTVGGAYGKLGNECSHWGPHHAPINMMQGQNGQMGGPPLNMPIGAPNMMPGYQGWGTSPQQQQYGYGNSGPGSYQGWGAPPGPQGPPPQWSNYAGPQQTQGYGGYDMYNSTSTGAPSGPSGGGSWNSWNMPPNSAGPTGAPGAGAGTATDMYSRAQAWATGGPSTTGPVGGMPRTGPGNSASKSGSEYDYGGYGSGYDYDYSNYVKQEGASNYGAGPRSAYGNDSSTQPPYATSQAV.

RRM domains lie at 7–88 (GKLF…RTLQ) and 96–173 (YKVF…KAEP). 2 disordered regions span residues 171-191 (AEPR…GGAY) and 240-373 (GTSP…SEYD). The residue at position 177 (Ser177) is a Phosphoserine. The span at 240-250 (GTSPQQQQYGY) shows a compositional bias: polar residues. Positions 264-273 (PPGPQGPPPQ) are enriched in pro residues. Residues 275–284 (SNYAGPQQTQ) show a composition bias toward polar residues. The span at 293 to 302 (NSTSTGAPSG) shows a compositional bias: low complexity. Ser366, Ser368, and Ser370 each carry phosphoserine. Tyr372 is subject to Phosphotyrosine. Ser379 bears the Phosphoserine mark. The tract at residues 392-421 (EGASNYGAGPRSAYGNDSSTQPPYATSQAV) is disordered. A compositionally biased stretch (polar residues) spans 406–421 (GNDSSTQPPYATSQAV).

In terms of assembly, interacts with sqd; the interaction is RNA-dependent and may be specific for sqd isoform A/sqdA. Interacts with otu; the interaction is RNA-independent.

It is found in the nucleus. Its subcellular location is the cytoplasm. In terms of biological role, this protein is a component of ribonucleosomes. Could be needed to organize a concentration gradient of a dorsalizing morphogen (Dm) originating in the germinal vesicle. Interacts with grk mRNA (via 3' UTR) and involved in its localization to the dorsal anterior region of the oocyte during dorsal-ventral axis determination; may function as a ribonuclear protein complex together with sqd and otu. Required for polytene chromosome dispersal in nurse cells during oogenesis. May be involved in the regulation of splicing. This chain is Heterogeneous nuclear ribonucleoprotein 27C, found in Drosophila melanogaster (Fruit fly).